The following is a 1229-amino-acid chain: Pesticidal crystal protein Cry1Bb (1229 aa).

The protein belongs to the delta endotoxin family.

Its function is as follows. Promotes colloidosmotic lysis by binding to the midgut epithelial cells of many lepidopteran larvae. The sequence is that of Pesticidal crystal protein Cry1Bb (cry1Bb) from Bacillus thuringiensis.